The sequence spans 242 residues: Uridylate kinase (242 aa).

11–14 (KLSG) is a binding site for ATP. Residues 19 to 24 (GNMGYG) are involved in allosteric activation by GTP. Glycine 53 is a binding site for UMP. ATP contacts are provided by glycine 54 and arginine 58. Residues aspartate 73 and 134–141 (SGNPFFTT) contribute to the UMP site. Residues threonine 161, tyrosine 167, and aspartate 170 each contribute to the ATP site.

The protein belongs to the UMP kinase family. Homohexamer.

The protein localises to the cytoplasm. The enzyme catalyses UMP + ATP = UDP + ADP. Its pathway is pyrimidine metabolism; CTP biosynthesis via de novo pathway; UDP from UMP (UMPK route): step 1/1. Its activity is regulated as follows. Allosterically activated by GTP. Inhibited by UTP. Functionally, catalyzes the reversible phosphorylation of UMP to UDP. The sequence is that of Uridylate kinase from Nostoc sp. (strain PCC 7120 / SAG 25.82 / UTEX 2576).